Reading from the N-terminus, the 92-residue chain is MQRVILVVLLLSCMAVLSVRADNSEMLAPPPRPEEFTSAQQLRQYLAALNEYYSIMGRPRFGKRGDSFRKREFFRTNGERYPEDAAAWTEFQ.

The N-terminal stretch at 1 to 21 is a signal peptide; the sequence is MQRVILVVLLLSCMAVLSVRA. Phe-61 carries the post-translational modification Phenylalanine amide.

It belongs to the NPY family. In terms of tissue distribution, highly expressed in the abdominal ganglion, to lesser extent in the pleural-pedal ganglion and much lower in the cerebral ganglion.

Its subcellular location is the secreted. In terms of biological role, may play a role in the regulation of viscermotor functions during egg laying. This is Pro-neuropeptide Y (NPY) from Aplysia californica (California sea hare).